Here is a 68-residue protein sequence, read N- to C-terminus: Conotoxin PnMLKM-011 (68 aa).

Residues 1–17 (MGVVLFIFLVLFPLATL) form the signal peptide. The propeptide occupies 18–51 (QLDPDQPVERYAENKQLLNPDERRGIILHALGQR). 3 disulfide bridges follow: Cys-53/Cys-65, Cys-54/Cys-63, and Cys-59/Cys-66. Residue Leu-67 is modified to Leucine amide.

This sequence belongs to the conotoxin M superfamily. Expressed by the venom duct.

The protein resides in the secreted. The protein is Conotoxin PnMLKM-011 of Conus pennaceus (Feathered cone).